The following is a 460-amino-acid chain: ATP synthase subunit beta (460 aa).

Gly150 to Thr157 contributes to the ATP binding site.

Belongs to the ATPase alpha/beta chains family. As to quaternary structure, F-type ATPases have 2 components, CF(1) - the catalytic core - and CF(0) - the membrane proton channel. CF(1) has five subunits: alpha(3), beta(3), gamma(1), delta(1), epsilon(1). CF(0) has three main subunits: a(1), b(2) and c(9-12). The alpha and beta chains form an alternating ring which encloses part of the gamma chain. CF(1) is attached to CF(0) by a central stalk formed by the gamma and epsilon chains, while a peripheral stalk is formed by the delta and b chains.

The protein resides in the cell inner membrane. It catalyses the reaction ATP + H2O + 4 H(+)(in) = ADP + phosphate + 5 H(+)(out). Produces ATP from ADP in the presence of a proton gradient across the membrane. The catalytic sites are hosted primarily by the beta subunits. The protein is ATP synthase subunit beta of Sodalis glossinidius (strain morsitans).